The primary structure comprises 455 residues: MHIDTTAAPVAHAPRPFYRHLYFQVLCAIVAGALIGHFYPETGEALKPLGDAFIKLVKMIIAPVIFLTIVTGLAGMGTLKGVGSVVGKAFGYFLTFSTLALVVGLITANVIRPGAGMNIDPASLDASKVADYASKAHESSLTGFVMDIIPSTITSAFVDGNILQVLFVAILFGIGLILIGDKGKPVVALFEAISHAVFRMVDILMKAAPIGAFGAFAFTIGKYGIASVVNLATLVGTFYLTSALFVIVVLGTVCMLNGFSIFRLISYLKAEILLVLGTSSSESALPSLMEKMEKAGCKRSVVGLVVPTGYSFNLDGTNIYMTLAALFIAQATNTDLTLQQQILLLLVAMLSSKGAAGVTGAGFITLAATLSVVPTVPVAGMALILGVDRFMSECRSITNFIGNAVATVVVSRWEGALDREQFDRVLGGEAGGEVAPIHDLHGAPAGLRLNEASAD.

A run of 8 helical transmembrane segments spans residues 20 to 40, 59 to 79, 91 to 111, 160 to 180, 209 to 229, 231 to 251, 344 to 364, and 367 to 387; these read HLYF…HFYP, MIIA…MGTL, GYFL…ANVI, GNIL…ILIG, PIGA…ASVV, LATL…VVLG, LLLV…AGFI, and AATL…ILGV.

The protein belongs to the dicarboxylate/amino acid:cation symporter (DAACS) (TC 2.A.23) family.

It localises to the cell inner membrane. Responsible for the transport of dicarboxylates such as succinate, fumarate, and malate from the periplasm across the membrane. This chain is C4-dicarboxylate transport protein, found in Paracoccus denitrificans (strain Pd 1222).